The following is a 281-amino-acid chain: MNSFKIKSYAKINLALNVTGKKSKLHNIESLISFIDLHDSITITESNTKQHKINFIGRFSKNISKINTISKLLKILDNKKLLNNKKFEIKVIKHIPQKAGMGGGSMNAASLLNFFIEKKLIKIKKNDSKKISNEIGSDVILGIKPSLAILLSNGDIKKFKNKIKFHILVAKPNFGCSTKYIYSKVDSFSKPQFNPPKQKLFEAKYLKNLDNDLEKVALNKYPELKRIKSYLNGLPNTLFVRMSGSGSSIVAYFHSKKACKKACSQYKRKFNNHWCIESKTI.

Residues Lys-11 and Asp-138 contribute to the active site.

This sequence belongs to the GHMP kinase family. IspE subfamily.

It catalyses the reaction 4-CDP-2-C-methyl-D-erythritol + ATP = 4-CDP-2-C-methyl-D-erythritol 2-phosphate + ADP + H(+). It participates in isoprenoid biosynthesis; isopentenyl diphosphate biosynthesis via DXP pathway; isopentenyl diphosphate from 1-deoxy-D-xylulose 5-phosphate: step 3/6. Functionally, catalyzes the phosphorylation of the position 2 hydroxy group of 4-diphosphocytidyl-2C-methyl-D-erythritol. This is 4-diphosphocytidyl-2-C-methyl-D-erythritol kinase from Pelagibacter ubique (strain HTCC1062).